The chain runs to 1342 residues: DNA-directed RNA polymerase subunit beta (1342 aa).

The protein belongs to the RNA polymerase beta chain family. The RNAP catalytic core consists of 2 alpha, 1 beta, 1 beta' and 1 omega subunit. When a sigma factor is associated with the core the holoenzyme is formed, which can initiate transcription.

It carries out the reaction RNA(n) + a ribonucleoside 5'-triphosphate = RNA(n+1) + diphosphate. In terms of biological role, DNA-dependent RNA polymerase catalyzes the transcription of DNA into RNA using the four ribonucleoside triphosphates as substrates. This Mannheimia succiniciproducens (strain KCTC 0769BP / MBEL55E) protein is DNA-directed RNA polymerase subunit beta.